Reading from the N-terminus, the 142-residue chain is MVDATAPKKRTFKQFSFKGVDLKDLVEMPTEEFTKLCGARVRRRFSRGLDSKPMGLIKKLRAARAATEPNERPAVVKTHLRNMIVVPEMIGSVVGVYNGKVFNTVEIKPEMVGHYLGEFSITYTPVRHGRAGNASSKFMPLR.

It belongs to the universal ribosomal protein uS19 family. Component of the small ribosomal subunit. Mature ribosomes consist of a small (40S) and a large (60S) subunit. The 40S subunit contains about 32 different proteins and 1 molecule of RNA (18S). The 60S subunit contains 45 different proteins and 3 molecules of RNA (25S, 5.8S and 5S).

It is found in the cytoplasm. Functionally, component of the ribosome, a large ribonucleoprotein complex responsible for the synthesis of proteins in the cell. The small ribosomal subunit (SSU) binds messenger RNAs (mRNAs) and translates the encoded message by selecting cognate aminoacyl-transfer RNA (tRNA) molecules. The large subunit (LSU) contains the ribosomal catalytic site termed the peptidyl transferase center (PTC), which catalyzes the formation of peptide bonds, thereby polymerizing the amino acids delivered by tRNAs into a polypeptide chain. The nascent polypeptides leave the ribosome through a tunnel in the LSU and interact with protein factors that function in enzymatic processing, targeting, and the membrane insertion of nascent chains at the exit of the ribosomal tunnel. RPS15 has a role in the late stage of the assembly of pre-40S particles within the nucleus and controls their export to the cytoplasm. The protein is Small ribosomal subunit protein uS19 (RPS15) of Candida albicans (strain SC5314 / ATCC MYA-2876) (Yeast).